The sequence spans 467 residues: MSLSLWQQCLARLQDELPATEFSMWIRPLQAELSDNTLALYAPNRFVLDWVRDKYLNNINGLLTSFCGADAPQLRFEVGTKSVTQTPQAAVTSNVAAPAQVAQTQPQRAAPSTRSGWDNVPAPAEPTYRSNVNVKHTFDNFVEGKSNQLARAAARQVADNPGGAYNPLFLYGGTGLGKTHLLHAVGNGIMARKPNAKVVYMHSERFVQDMVKALQNNAIEEFKRYYRSVDALLIDDIQFFANKERSQEEFFHTFNALLEGNQQIILTSDRYPKEINGVEDRLKSRFGWGLTVAIEPPELETRVAILMKKADENDIRLPGEVAFFIAKRLRSNVRELEGALNRVIANANFTGRAITIDFVREALRDLLALQEKLVTIDNIQKTVAEYYKIKVADLLSKRRSRSVARPRQMAMALAKELTNHSLPEIGDAFGGRDHTTVLHACRKIEQLREESHDIKEDFSNLIRTLSS.

Residues 1-90 (MSLSLWQQCL…KSVTQTPQAA (90 aa)) form a domain I, interacts with DnaA modulators region. The domain II stretch occupies residues 91 to 130 (VTSNVAAPAQVAQTQPQRAAPSTRSGWDNVPAPAEPTYRS). A compositionally biased stretch (low complexity) spans 97–111 (APAQVAQTQPQRAAP). A disordered region spans residues 97–119 (APAQVAQTQPQRAAPSTRSGWDN). The segment at 131–347 (NVNVKHTFDN…GALNRVIANA (217 aa)) is domain III, AAA+ region. ATP contacts are provided by Gly-175, Gly-177, Lys-178, and Thr-179. The interval 348-467 (NFTGRAITID…FSNLIRTLSS (120 aa)) is domain IV, binds dsDNA.

Belongs to the DnaA family. In terms of assembly, oligomerizes as a right-handed, spiral filament on DNA at oriC.

It is found in the cytoplasm. Functionally, plays an essential role in the initiation and regulation of chromosomal replication. ATP-DnaA binds to the origin of replication (oriC) to initiate formation of the DNA replication initiation complex once per cell cycle. Binds the DnaA box (a 9 base pair repeat at the origin) and separates the double-stranded (ds)DNA. Forms a right-handed helical filament on oriC DNA; dsDNA binds to the exterior of the filament while single-stranded (ss)DNA is stabiized in the filament's interior. The ATP-DnaA-oriC complex binds and stabilizes one strand of the AT-rich DNA unwinding element (DUE), permitting loading of DNA polymerase. After initiation quickly degrades to an ADP-DnaA complex that is not apt for DNA replication. Binds acidic phospholipids. This Escherichia coli O157:H7 protein is Chromosomal replication initiator protein DnaA.